Here is a 166-residue protein sequence, read N- to C-terminus: Xanthine-guanine phosphoribosyltransferase (166 aa).

5-phospho-alpha-D-ribose 1-diphosphate is bound by residues 42-43 and 99-107; these read RG and DDLTDTGKT. Position 100 (aspartate 100) interacts with Mg(2+). Guanine is bound by residues aspartate 103 and isoleucine 146. Residues aspartate 103 and isoleucine 146 each coordinate xanthine. GMP-binding positions include 103 to 107 and 145 to 146; these read DTGKT and WI.

Belongs to the purine/pyrimidine phosphoribosyltransferase family. XGPT subfamily. In terms of assembly, homotetramer. It depends on Mg(2+) as a cofactor.

It is found in the cell inner membrane. The catalysed reaction is GMP + diphosphate = guanine + 5-phospho-alpha-D-ribose 1-diphosphate. The enzyme catalyses XMP + diphosphate = xanthine + 5-phospho-alpha-D-ribose 1-diphosphate. It catalyses the reaction IMP + diphosphate = hypoxanthine + 5-phospho-alpha-D-ribose 1-diphosphate. Its pathway is purine metabolism; GMP biosynthesis via salvage pathway; GMP from guanine: step 1/1. The protein operates within purine metabolism; XMP biosynthesis via salvage pathway; XMP from xanthine: step 1/1. Its function is as follows. Purine salvage pathway enzyme that catalyzes the transfer of the ribosyl-5-phosphate group from 5-phospho-alpha-D-ribose 1-diphosphate (PRPP) to the N9 position of the 6-oxopurines guanine and xanthine to form the corresponding ribonucleotides GMP (guanosine 5'-monophosphate) and XMP (xanthosine 5'-monophosphate), with the release of PPi. To a lesser extent, also acts on hypoxanthine. The polypeptide is Xanthine-guanine phosphoribosyltransferase (Mesorhizobium japonicum (strain LMG 29417 / CECT 9101 / MAFF 303099) (Mesorhizobium loti (strain MAFF 303099))).